Here is a 472-residue protein sequence, read N- to C-terminus: Phosphoenolpyruvate carboxylase (472 aa).

It belongs to the PEPCase type 2 family. In terms of assembly, homotetramer. Requires Mg(2+) as cofactor.

The enzyme catalyses oxaloacetate + phosphate = phosphoenolpyruvate + hydrogencarbonate. In terms of biological role, catalyzes the irreversible beta-carboxylation of phosphoenolpyruvate (PEP) to form oxaloacetate (OAA), a four-carbon dicarboxylic acid source for the tricarboxylic acid cycle. The chain is Phosphoenolpyruvate carboxylase from Pyrococcus furiosus (strain ATCC 43587 / DSM 3638 / JCM 8422 / Vc1).